The sequence spans 372 residues: Carbamoyl phosphate synthase small chain (372 aa).

Residues 1–184 (MKAYIYLEND…SFQKFNDAKR (184 aa)) form a CPSase region. L-glutamine is bound by residues serine 45, glycine 240, and glycine 242. The region spanning 188–372 (KVAVIDYGVK…YIFKEFMNLM (185 aa)) is the Glutamine amidotransferase type-1 domain. The active-site Nucleophile is cysteine 268. Residues leucine 269, glutamine 272, asparagine 310, and tyrosine 313 each contribute to the L-glutamine site. Residues histidine 351 and glutamate 353 contribute to the active site.

It belongs to the CarA family. Composed of two chains; the small (or glutamine) chain promotes the hydrolysis of glutamine to ammonia, which is used by the large (or ammonia) chain to synthesize carbamoyl phosphate. Tetramer of heterodimers (alpha,beta)4.

The catalysed reaction is hydrogencarbonate + L-glutamine + 2 ATP + H2O = carbamoyl phosphate + L-glutamate + 2 ADP + phosphate + 2 H(+). It carries out the reaction L-glutamine + H2O = L-glutamate + NH4(+). It participates in amino-acid biosynthesis; L-arginine biosynthesis; carbamoyl phosphate from bicarbonate: step 1/1. It functions in the pathway pyrimidine metabolism; UMP biosynthesis via de novo pathway; (S)-dihydroorotate from bicarbonate: step 1/3. In terms of biological role, small subunit of the glutamine-dependent carbamoyl phosphate synthetase (CPSase). CPSase catalyzes the formation of carbamoyl phosphate from the ammonia moiety of glutamine, carbonate, and phosphate donated by ATP, constituting the first step of 2 biosynthetic pathways, one leading to arginine and/or urea and the other to pyrimidine nucleotides. The small subunit (glutamine amidotransferase) binds and cleaves glutamine to supply the large subunit with the substrate ammonia. This chain is Carbamoyl phosphate synthase small chain, found in Campylobacter jejuni subsp. jejuni serotype O:2 (strain ATCC 700819 / NCTC 11168).